Here is a 563-residue protein sequence, read N- to C-terminus: NADPH oxidase 1 (563 aa).

Residues 1–8 (MGNWLVNH) lie on the Cytoplasmic side of the membrane. The helical transmembrane segment at 9 to 31 (WLSVLFLVSWLGLNIFLFVYVFL) threads the bilayer. Over 32-44 (NYEKSDKYYYTRE) the chain is Extracellular. A helical transmembrane segment spans residues 45–69 (ILGTALALARASALCLNFNSMVILI). Residues 54-282 (RASALCLNFN…LAPIAFYIFE (229 aa)) form the Ferric oxidoreductase domain. The Cytoplasmic segment spans residues 70–102 (PVCRNLLSFLRGTCSFCNHTLRKPLDHNLTFHK). Heme contacts are provided by His-101 and His-115. The chain crosses the membrane as a helical span at residues 103 to 123 (LVAYMICIFTAIHIIAHLFNF). Residues 124–167 (ERYSRSQQAMDGSLASVLSSLFHPEKEDSWLNPIQSPNVTVMYA) lie on the Extracellular side of the membrane. Asn-161 is a glycosylation site (N-linked (GlcNAc...) asparagine). Residues 168 to 188 (AFTSIAGLTGVVATVALVLMV) traverse the membrane as a helical segment. At 189–206 (TSAMEFIRRNYFELFWYT) the chain is on the cytoplasmic side. A helical membrane pass occupies residues 207 to 227 (HHLFIIYIICLGIHGLGGIVR). Heme contacts are provided by His-208 and His-220. Residues 228 to 395 (GQTEESMSES…TVSEDVFQYE (168 aa)) lie on the Extracellular side of the membrane. Asn-241 carries an N-linked (GlcNAc...) asparagine glycan. In terms of domain architecture, FAD-binding FR-type spans 283 to 390 (RILRFYRSRQ…DGPFGTVSED (108 aa)). An FAD-binding site is contributed by 337–343 (HPFTLTS). The helical transmembrane segment at 396–416 (VAVLVGAGIGVTPFASFLKSI) threads the bilayer. Positions 396 to 535 (VAVLVGAGIG…GVFLCGPPTL (140 aa)) are interaction with NOXO1. Over 417-563 (WYKFQRAHNK…VQFYFNKETF (147 aa)) the chain is Cytoplasmic. Position 429 is a phosphothreonine; by PKC/PRKCB (Thr-429).

NOX1, NOXA1, NOXO1, RAC1 and CYBA forms a functional multimeric complex supporting ROS production. Interacts with NOXO1. Interacts (via FAD-binding FR-type domain) with ARHGEF7 (via PH domain). The phosphorylated form at Thr-429 interacts with NOXA1 with greater affinity. FAD is required as a cofactor. Phosphorylation at Thr-429 mediated by PKC/PRKBC positively regulates its interaction with NOXA1 and enzyme activity. In terms of tissue distribution, expressed in vascular smooth muscle cells.

The protein localises to the cell projection. Its subcellular location is the invadopodium membrane. It is found in the cell membrane. It carries out the reaction NADPH + 2 O2 = 2 superoxide + NADP(+) + H(+). The oxidase activity is potentiated by NOXA1 and NOXO1. In terms of biological role, NADPH oxidase that catalyzes the generation of superoxide from molecular oxygen utilizing NADPH as an electron donor. The chain is NADPH oxidase 1 (Nox1) from Rattus norvegicus (Rat).